The following is a 320-amino-acid chain: Ferrochelatase (320 aa).

Positions 194 and 275 each coordinate Fe cation.

Belongs to the ferrochelatase family.

The protein resides in the cytoplasm. The catalysed reaction is heme b + 2 H(+) = protoporphyrin IX + Fe(2+). It functions in the pathway porphyrin-containing compound metabolism; protoheme biosynthesis; protoheme from protoporphyrin-IX: step 1/1. Its function is as follows. Catalyzes the ferrous insertion into protoporphyrin IX. This is Ferrochelatase from Pectobacterium atrosepticum (strain SCRI 1043 / ATCC BAA-672) (Erwinia carotovora subsp. atroseptica).